The sequence spans 490 residues: Protein nucleotidyltransferase YdiU (490 aa).

Residues Gly94, Gly96, Arg97, Lys117, Asp129, Gly130, Arg180, and Arg187 each contribute to the ATP site. The active-site Proton acceptor is the Asp256. Asn257 and Asp266 together coordinate Mg(2+). Residue Asp266 participates in ATP binding.

This sequence belongs to the SELO family. Mg(2+) is required as a cofactor. It depends on Mn(2+) as a cofactor.

It carries out the reaction L-seryl-[protein] + ATP = 3-O-(5'-adenylyl)-L-seryl-[protein] + diphosphate. The enzyme catalyses L-threonyl-[protein] + ATP = 3-O-(5'-adenylyl)-L-threonyl-[protein] + diphosphate. The catalysed reaction is L-tyrosyl-[protein] + ATP = O-(5'-adenylyl)-L-tyrosyl-[protein] + diphosphate. It catalyses the reaction L-histidyl-[protein] + UTP = N(tele)-(5'-uridylyl)-L-histidyl-[protein] + diphosphate. It carries out the reaction L-seryl-[protein] + UTP = O-(5'-uridylyl)-L-seryl-[protein] + diphosphate. The enzyme catalyses L-tyrosyl-[protein] + UTP = O-(5'-uridylyl)-L-tyrosyl-[protein] + diphosphate. In terms of biological role, nucleotidyltransferase involved in the post-translational modification of proteins. It can catalyze the addition of adenosine monophosphate (AMP) or uridine monophosphate (UMP) to a protein, resulting in modifications known as AMPylation and UMPylation. This Clostridium perfringens (strain 13 / Type A) protein is Protein nucleotidyltransferase YdiU.